Here is a 331-residue protein sequence, read N- to C-terminus: Barley B recombinant-like protein D (331 aa).

The stretch at 43–101 (ALMNDRDNAIRERDHALAEKKAAIAERDMAFTQRDAAMAERNAAVVERDNALAALELAR) forms a coiled coil. The tract at residues 51–86 (AIRERDHALAEKKAAIAERDMAFTQRDAAMAERNAA) is alanine-zipper. Positions 104–122 (GLNMNNGNGFPQGSLSGSK) are enriched in polar residues. Disordered regions lie at residues 104–140 (GLNM…PLQL) and 156–205 (AYPI…VGMS).

It belongs to the BBR/BPC family. In terms of assembly, homodimer. Heterodimer.

The protein resides in the nucleus. In terms of biological role, transcriptional regulator that specifically binds to GA-rich elements (GAGA-repeats) present in regulatory sequences of genes involved in developmental processes. The chain is Barley B recombinant-like protein D from Oryza sativa subsp. japonica (Rice).